A 457-amino-acid polypeptide reads, in one-letter code: Elongation factor 1-alpha (457 aa).

G2 carries the post-translational modification N,N,N-trimethylglycine. K3 is subject to N6,N6-dimethyllysine; alternate. Residue K3 is modified to N6-methyllysine; alternate. The region spanning 5–240 (KTHVNVVVIG…DAIEPPVRPS (236 aa)) is the tr-type G domain. The G1 stretch occupies residues 14-21 (GHVDSGKS). 14–21 (GHVDSGKS) contributes to the GTP binding site. The residue at position 30 (K30) is an N6-methyllysine. The G2 stretch occupies residues 70–74 (GITID). K79 is modified (N6,N6,N6-trimethyllysine). The interval 91–94 (DAPG) is G3. GTP contacts are provided by residues 91-95 (DAPGH) and 153-156 (NKMD). Residues 153 to 156 (NKMD) form a G4 region. Residues 192-194 (SGW) form a G5 region. The residue at position 316 (K316) is an N6,N6-dimethyllysine; alternate. K316 is subject to N6-methyllysine; alternate. K389 is subject to N6-methyllysine.

This sequence belongs to the TRAFAC class translation factor GTPase superfamily. Classic translation factor GTPase family. EF-Tu/EF-1A subfamily.

Its subcellular location is the cytoplasm. This protein promotes the GTP-dependent binding of aminoacyl-tRNA to the A-site of ribosomes during protein biosynthesis. The polypeptide is Elongation factor 1-alpha (TEF-3) (Mucor circinelloides f. lusitanicus (Mucor racemosus var. lusitanicus)).